Consider the following 258-residue polypeptide: Regulatory protein RecX (258 aa).

Belongs to the RecX family.

It is found in the cytoplasm. In terms of biological role, modulates RecA activity. This is Regulatory protein RecX from Streptococcus mutans serotype c (strain ATCC 700610 / UA159).